The following is a 262-amino-acid chain: Putative hydroxypyruvate isomerase (262 aa).

Catalysis depends on proton donor/acceptor residues Glu146 and Glu244.

Belongs to the hyi family.

The enzyme catalyses 3-hydroxypyruvate = 2-hydroxy-3-oxopropanoate. Functionally, catalyzes the reversible isomerization between hydroxypyruvate and 2-hydroxy-3-oxopropanoate (also termed tartronate semialdehyde). This is Putative hydroxypyruvate isomerase from Caenorhabditis elegans.